The following is a 510-amino-acid chain: GMP synthase [glutamine-hydrolyzing] (510 aa).

The region spanning Leu-5 to Asp-195 is the Glutamine amidotransferase type-1 domain. Cys-82 functions as the Nucleophile in the catalytic mechanism. Catalysis depends on residues His-169 and Glu-171. Residues Trp-196–Arg-385 enclose the GMPS ATP-PPase domain. Ser-223–Ser-229 provides a ligand contact to ATP.

As to quaternary structure, homodimer.

It catalyses the reaction XMP + L-glutamine + ATP + H2O = GMP + L-glutamate + AMP + diphosphate + 2 H(+). The protein operates within purine metabolism; GMP biosynthesis; GMP from XMP (L-Gln route): step 1/1. Catalyzes the synthesis of GMP from XMP. The sequence is that of GMP synthase [glutamine-hydrolyzing] from Clostridium botulinum (strain Kyoto / Type A2).